The primary structure comprises 431 residues: Serine--tRNA ligase (431 aa).

T238 to E240 is an L-serine binding site. R269–E271 is a binding site for ATP. E292 provides a ligand contact to L-serine. E356–S359 lines the ATP pocket. S391 provides a ligand contact to L-serine.

Belongs to the class-II aminoacyl-tRNA synthetase family. Type-1 seryl-tRNA synthetase subfamily. Homodimer. The tRNA molecule binds across the dimer.

Its subcellular location is the cytoplasm. The enzyme catalyses tRNA(Ser) + L-serine + ATP = L-seryl-tRNA(Ser) + AMP + diphosphate + H(+). It carries out the reaction tRNA(Sec) + L-serine + ATP = L-seryl-tRNA(Sec) + AMP + diphosphate + H(+). It functions in the pathway aminoacyl-tRNA biosynthesis; selenocysteinyl-tRNA(Sec) biosynthesis; L-seryl-tRNA(Sec) from L-serine and tRNA(Sec): step 1/1. Functionally, catalyzes the attachment of serine to tRNA(Ser). Is also able to aminoacylate tRNA(Sec) with serine, to form the misacylated tRNA L-seryl-tRNA(Sec), which will be further converted into selenocysteinyl-tRNA(Sec). The polypeptide is Serine--tRNA ligase (Bdellovibrio bacteriovorus (strain ATCC 15356 / DSM 50701 / NCIMB 9529 / HD100)).